A 463-amino-acid chain; its full sequence is MKKILVIGDLIADYYLWGKSERLSPEAPVPVLEVKKESKNLGGAANVANNLISLKAKVFLCGVVGDDLEGKHFISALKAREIDTSGILTDKTRCTTLKTRIIAQNQQIVRVDKEIKDPLNADLRKKLLDFFTEKIQEIDGVILSDYNKGVLDFELTQKMITLANQHHKLILCDPKGKDYSKYSHASLITPNRAELEHALHLKLDSHANLSKALQILKETYQIAMPLVTLSEQGIAFLEKGELVNCPTIAKEVYDVTGAGDTVIASLTLSLLESMSLKDACEFANAAAAVVVGKMGSALASLEEIALILNQTHPKILPLEKLLETLEHHQQKIVFTNGCFDLLHKGHASYLQKAKALGDILVVGLNSDNSIKRLKGNKRPIVSEKDRAFLLASLSCVDYVVVFEEDAPIKLIQALKPDILVKGADYLNKEVIGSEFAKETHLMEFEEGYSTSAIIEKIKRTHND.

Residues 1 to 315 form a ribokinase region; sequence MKKILVIGDL…LILNQTHPKI (315 aa). 191–194 serves as a coordination point for ATP; sequence NRAE. Aspartate 260 is a catalytic residue. A cytidylyltransferase region spans residues 334-463; it reads FTNGCFDLLH…IEKIKRTHND (130 aa).

This sequence in the N-terminal section; belongs to the carbohydrate kinase PfkB family. In the C-terminal section; belongs to the cytidylyltransferase family. In terms of assembly, homodimer.

The enzyme catalyses D-glycero-beta-D-manno-heptose 7-phosphate + ATP = D-glycero-beta-D-manno-heptose 1,7-bisphosphate + ADP + H(+). It catalyses the reaction D-glycero-beta-D-manno-heptose 1-phosphate + ATP + H(+) = ADP-D-glycero-beta-D-manno-heptose + diphosphate. The protein operates within nucleotide-sugar biosynthesis; ADP-L-glycero-beta-D-manno-heptose biosynthesis; ADP-L-glycero-beta-D-manno-heptose from D-glycero-beta-D-manno-heptose 7-phosphate: step 1/4. Its pathway is nucleotide-sugar biosynthesis; ADP-L-glycero-beta-D-manno-heptose biosynthesis; ADP-L-glycero-beta-D-manno-heptose from D-glycero-beta-D-manno-heptose 7-phosphate: step 3/4. In terms of biological role, catalyzes the phosphorylation of D-glycero-D-manno-heptose 7-phosphate at the C-1 position to selectively form D-glycero-beta-D-manno-heptose-1,7-bisphosphate. Its function is as follows. Catalyzes the ADP transfer from ATP to D-glycero-beta-D-manno-heptose 1-phosphate, yielding ADP-D-glycero-beta-D-manno-heptose. This chain is Bifunctional protein HldE, found in Helicobacter pylori (strain HPAG1).